The sequence spans 329 residues: Ribosomal protein L11 methyltransferase (329 aa).

Residues Thr-177, Gly-198, Asp-220, and Asn-264 each coordinate S-adenosyl-L-methionine.

The protein belongs to the methyltransferase superfamily. PrmA family.

The protein resides in the cytoplasm. The enzyme catalyses L-lysyl-[protein] + 3 S-adenosyl-L-methionine = N(6),N(6),N(6)-trimethyl-L-lysyl-[protein] + 3 S-adenosyl-L-homocysteine + 3 H(+). In terms of biological role, methylates ribosomal protein L11. The chain is Ribosomal protein L11 methyltransferase from Helicobacter acinonychis (strain Sheeba).